An 800-amino-acid chain; its full sequence is Phenylalanine--tRNA ligase beta subunit (800 aa).

Residues 39-147 (FDAIADIVVG…QDSVPGVRLV (109 aa)) form the tRNA-binding domain. The 77-residue stretch at 401–477 (WQAAQLRFRP…RVYGMDNIPP (77 aa)) folds into the B5 domain. Asp455, Asp461, Glu464, and Glu465 together coordinate Mg(2+). An FDX-ACB domain is found at 706 to 800 (PVFPPVKRDI…SLTEALGVRI (95 aa)).

The protein belongs to the phenylalanyl-tRNA synthetase beta subunit family. Type 1 subfamily. Tetramer of two alpha and two beta subunits. It depends on Mg(2+) as a cofactor.

The protein resides in the cytoplasm. It catalyses the reaction tRNA(Phe) + L-phenylalanine + ATP = L-phenylalanyl-tRNA(Phe) + AMP + diphosphate + H(+). This Oleidesulfovibrio alaskensis (strain ATCC BAA-1058 / DSM 17464 / G20) (Desulfovibrio alaskensis) protein is Phenylalanine--tRNA ligase beta subunit.